The primary structure comprises 292 residues: 4-hydroxy-tetrahydrodipicolinate synthase (292 aa).

Thr-45 contacts pyruvate. The active-site Proton donor/acceptor is Tyr-133. Lys-161 (schiff-base intermediate with substrate) is an active-site residue. Ile-203 is a pyruvate binding site.

It belongs to the DapA family. Homotetramer; dimer of dimers.

It localises to the cytoplasm. It catalyses the reaction L-aspartate 4-semialdehyde + pyruvate = (2S,4S)-4-hydroxy-2,3,4,5-tetrahydrodipicolinate + H2O + H(+). It functions in the pathway amino-acid biosynthesis; L-lysine biosynthesis via DAP pathway; (S)-tetrahydrodipicolinate from L-aspartate: step 3/4. Its function is as follows. Catalyzes the condensation of (S)-aspartate-beta-semialdehyde [(S)-ASA] and pyruvate to 4-hydroxy-tetrahydrodipicolinate (HTPA). This is 4-hydroxy-tetrahydrodipicolinate synthase from Shigella flexneri.